A 411-amino-acid chain; its full sequence is Putative ion-transport protein YfeO (411 aa).

11 helical membrane-spanning segments follow: residues 9–29 (MLLLSLPALIIGVASSLVLIA), 54–74 (DSPFWIVGMLTLTGVVVGLII), 99–119 (ALPGLLLALIIGLAGGVSLGP), 149–169 (ILASAGTIGALFGTPVAAALI), 186–206 (LFAPLMAAAAGSLTTSLFFHP), 223–243 (IASGAIVAAIAIAAGMVAVWC), 258–278 (VLILGIGGFILGILGVIGGPL), 296–316 (LGAGDYFTLAVVKLAALVIAA), 322–342 (GGRIFPAVFIGAALGLMLHAH), 343–363 (VEAVPAAITVSCAILGLVLVV), and 386–406 (LLCIVMLPAWLLLAGKPLLAA).

This sequence belongs to the chloride channel (TC 2.A.49) family.

The protein resides in the cell membrane. The chain is Putative ion-transport protein YfeO from Salmonella choleraesuis (strain SC-B67).